Consider the following 398-residue polypeptide: GTP cyclohydrolase-2 (398 aa).

Positions 1-172 (MNTPTHTHPH…TAAAGASTTE (172 aa)) are unknown. The tract at residues 173–398 (YELVTRTPVP…VKSIPKTGHA (226 aa)) is GTP cyclohydrolase II. 220-224 (RVHSS) is a GTP binding site. Positions 225, 236, and 238 each coordinate Zn(2+). Residues Gln241, 263 to 265 (EGR), and Thr285 contribute to the GTP site. Catalysis depends on Asp297, which acts as the Proton acceptor. Arg299 (nucleophile) is an active-site residue. 2 residues coordinate GTP: Ser320 and Lys325. The segment at 375–398 (QRPQDPSETVDGETVKSIPKTGHA) is disordered.

In the C-terminal section; belongs to the GTP cyclohydrolase II family. It depends on Zn(2+) as a cofactor.

It carries out the reaction GTP + 4 H2O = 2,5-diamino-6-hydroxy-4-(5-phosphoribosylamino)-pyrimidine + formate + 2 phosphate + 3 H(+). Its pathway is cofactor biosynthesis; riboflavin biosynthesis; 5-amino-6-(D-ribitylamino)uracil from GTP: step 1/4. In terms of biological role, catalyzes the conversion of GTP to 2,5-diamino-6-ribosylamino-4(3H)-pyrimidinone 5'-phosphate (DARP), formate and pyrophosphate. In Xylella fastidiosa (strain 9a5c), this protein is GTP cyclohydrolase-2 (ribA).